A 55-amino-acid polypeptide reads, in one-letter code: PI-stichotoxin-She2a (55 aa).

A BPTI/Kunitz inhibitor domain is found at 3–53; that stretch reads CSEPKKVGRCKGYFPRFYFDSETGKCTPFIYGGCGGNGNNFETLHQCRAIC. 3 cysteine pairs are disulfide-bonded: C3/C53, C12/C36, and C28/C49.

Its subcellular location is the secreted. The protein localises to the nematocyst. Its function is as follows. Active against serine, cysteine, and aspartic proteases. Can bind vertebrate trypsin and chymotrypsin. In Stichodactyla helianthus (Sun anemone), this protein is PI-stichotoxin-She2a.